Here is a 172-residue protein sequence, read N- to C-terminus: Type IV secretion system putative outer membrane lipoprotein BMEII0036 (172 aa).

Residues 1-15 (MRTLVMVACAVSLAA) form the signal peptide. Residue Cys-16 is the site of N-palmitoyl cysteine attachment. The S-diacylglycerol cysteine moiety is linked to residue Cys-16. The region spanning 58–172 (WPARPPKQTV…RRVDIEILRK (115 aa)) is the OmpA-like domain.

The protein resides in the cell outer membrane. The protein is Type IV secretion system putative outer membrane lipoprotein BMEII0036 of Brucella melitensis biotype 1 (strain ATCC 23456 / CCUG 17765 / NCTC 10094 / 16M).